Here is a 147-residue protein sequence, read N- to C-terminus: MFDVSFTELMVIGVIALVVIGPERLPKVARTIGHLLGRAQRYVNDVKSDIRREIELDELRKFKNEMDETARSMQTSLRETEDTLRDSTQALRAELDDTARDASKAVNGADAPAEPAPAVASDTDTRSIAPPAAATPADKTPPTGSAT.

A helical transmembrane segment spans residues M1 to G21. The segment at D67–T147 is disordered. Positions A93–S103 are enriched in basic and acidic residues. Low complexity-rich tracts occupy residues A109–A120 and A129–T147.

This sequence belongs to the TatB family. As to quaternary structure, the Tat system comprises two distinct complexes: a TatABC complex, containing multiple copies of TatA, TatB and TatC subunits, and a separate TatA complex, containing only TatA subunits. Substrates initially bind to the TatABC complex, which probably triggers association of the separate TatA complex to form the active translocon.

The protein localises to the cell inner membrane. Part of the twin-arginine translocation (Tat) system that transports large folded proteins containing a characteristic twin-arginine motif in their signal peptide across membranes. Together with TatC, TatB is part of a receptor directly interacting with Tat signal peptides. TatB may form an oligomeric binding site that transiently accommodates folded Tat precursor proteins before their translocation. The polypeptide is Sec-independent protein translocase protein TatB (Bordetella pertussis (strain Tohama I / ATCC BAA-589 / NCTC 13251)).